Reading from the N-terminus, the 409-residue chain is Galactosylgalactosylxylosylprotein 3-beta-glucuronosyltransferase S (409 aa).

Residues 1 to 45 (MSSARLLESQTSDEDNEDIERRPHQSHSRSCSNNTTPTHPPHPMV) form a disordered region. Over 1 to 53 (MSSARLLESQTSDEDNEDIERRPHQSHSRSCSNNTTPTHPPHPMVRKGGVARR) the chain is Cytoplasmic. S9 carries the phosphoserine modification. A Phosphothreonine modification is found at T11. 2 positions are modified to phosphoserine: S12 and S32. Residues 54–73 (ICLIGGALFLLLVALCYLTL) form a helical; Signal-anchor for type II membrane protein membrane-spanning segment. Residues 74 to 409 (SGDTRLGGSE…RENPHSKILS (336 aa)) lie on the Lumenal side of the membrane. N102 and N223 each carry an N-linked (GlcNAc...) asparagine glycan. Residue D235 coordinates Mn(2+). Catalysis depends on E318, which acts as the Proton acceptor. The N-linked (GlcNAc...) asparagine glycan is linked to N338. Residues 389–409 (EGRNALISKNGRENPHSKILS) form a disordered region. Positions 398-409 (NGRENPHSKILS) are enriched in basic and acidic residues.

The protein belongs to the glycosyltransferase 43 family. Requires Mn(2+) as cofactor.

The protein localises to the golgi apparatus membrane. It carries out the reaction 3-O-(beta-D-galactosyl-(1-&gt;3)-beta-D-galactosyl-(1-&gt;4)-beta-D-xylosyl)-L-seryl-[protein] + UDP-alpha-D-glucuronate = 3-O-(beta-D-GlcA-(1-&gt;3)-beta-D-Gal-(1-&gt;3)-beta-D-Gal-(1-&gt;4)-beta-D-Xyl)-L-seryl-[protein] + UDP + H(+). Its pathway is protein modification; protein glycosylation. In terms of biological role, involved in the biosynthesis of L2/HNK-1 carbohydrate epitope on both glycolipids and glycoproteins. Enzyme has a broad specificity. In Drosophila melanogaster (Fruit fly), this protein is Galactosylgalactosylxylosylprotein 3-beta-glucuronosyltransferase S (GlcAT-S).